A 175-amino-acid chain; its full sequence is Ribosome maturation factor RimM (175 aa).

The 77-residue stretch at 96-172 (PDTYYDHQLE…LIEIDPPDGL (77 aa)) folds into the PRC barrel domain.

Belongs to the RimM family. As to quaternary structure, binds ribosomal protein uS19.

It is found in the cytoplasm. Functionally, an accessory protein needed during the final step in the assembly of 30S ribosomal subunit, possibly for assembly of the head region. Essential for efficient processing of 16S rRNA. May be needed both before and after RbfA during the maturation of 16S rRNA. It has affinity for free ribosomal 30S subunits but not for 70S ribosomes. This is Ribosome maturation factor RimM from Mycolicibacterium paratuberculosis (strain ATCC BAA-968 / K-10) (Mycobacterium paratuberculosis).